The primary structure comprises 124 residues: MATINQLVNNPRKRSVVKSKVPALKACPQRRGVCTRVYTTTPKKPNSALRKVARVRLTSRFEVTSYIGGEGHNLQEHSVVLIRGGRVKDLPGVRYHIVRGALDTSGVNNRKHGRSKYGTKRPKS.

3-methylthioaspartic acid is present on Asp89. Positions 102-124 are disordered; that stretch reads LDTSGVNNRKHGRSKYGTKRPKS. A compositionally biased stretch (basic residues) spans 109–124; that stretch reads NRKHGRSKYGTKRPKS.

The protein belongs to the universal ribosomal protein uS12 family. As to quaternary structure, part of the 30S ribosomal subunit. Contacts proteins S8 and S17. May interact with IF1 in the 30S initiation complex.

With S4 and S5 plays an important role in translational accuracy. Functionally, interacts with and stabilizes bases of the 16S rRNA that are involved in tRNA selection in the A site and with the mRNA backbone. Located at the interface of the 30S and 50S subunits, it traverses the body of the 30S subunit contacting proteins on the other side and probably holding the rRNA structure together. The combined cluster of proteins S8, S12 and S17 appears to hold together the shoulder and platform of the 30S subunit. The protein is Small ribosomal subunit protein uS12 of Francisella tularensis subsp. tularensis (strain FSC 198).